The following is a 112-amino-acid chain: Cytochrome c (112 aa).

Heme c-binding residues include Cys-23, Cys-26, and His-27. Position 81 is an N6,N6,N6-trimethyllysine (Lys-81). Met-89 contributes to the heme c binding site. Position 95 is an N6,N6,N6-trimethyllysine (Lys-95).

Belongs to the cytochrome c family. In terms of processing, binds 1 heme c group covalently per subunit.

The protein localises to the mitochondrion intermembrane space. In terms of biological role, electron carrier protein. The oxidized form of the cytochrome c heme group can accept an electron from the heme group of the cytochrome c1 subunit of cytochrome reductase. Cytochrome c then transfers this electron to the cytochrome oxidase complex, the final protein carrier in the mitochondrial electron-transport chain. In Arabidopsis thaliana (Mouse-ear cress), this protein is Cytochrome c (CC-1).